We begin with the raw amino-acid sequence, 492 residues long: Rab5 GDP/GTP exchange factor (492 aa).

The segment at 1–74 (MSLKSERRGI…EEEAFASSQS (74 aa)) is interaction with ubiquitinated proteins. Residues 13-47 (DQSELLCKKGCGYYGNPAWQGFCSKCWREEYHKAR) form an A20-type zinc finger. Positions 19, 23, 35, and 38 each coordinate Zn(2+). Positions 66 to 85 (EEAFASSQSSQGAQSLTFSK) are disordered. Positions 69 to 84 (FASSQSSQGAQSLTFS) are enriched in low complexity. Phosphoserine occurs at positions 125 and 133. K152 and K171 each carry N6-acetyllysine. Residues 233 to 376 (EKKDLAIQKR…IEKLDAQSLN (144 aa)) form the VPS9 domain. A phosphoserine mark is found at S374, S378, S391, and S401. A coiled-coil region spans residues 408–449 (VKQMYKNLDLLSQLNERQERIMNEAKKLEKDLIDWTDGIAKE). Positions 471 to 492 (IDSENVENDKLPPPLQPQVYAG) are disordered.

In terms of assembly, heterodimer with RABEP1. The heterodimer binds RAB4A and RAB5A that have been activated by GTP-binding. Binds TSC2, GGA1, GGA2, GGA3, AP1G1 and AP1G2. Interacts with RAB21, and with 100-fold lower affinity also with RAB22. Interacts with ubiquitinated EGFR. Interacts with RGS14; the interaction is GTP-dependent. Post-translationally, monoubiquitinated. In terms of tissue distribution, detected in brain.

It is found in the cytoplasm. It localises to the early endosome. Its subcellular location is the recycling endosome. Functionally, rab effector protein acting as linker between gamma-adaptin and RAB5A. Involved in endocytic membrane fusion and membrane trafficking of recycling endosomes. Stimulates nucleotide exchange on RAB5A. Can act as a ubiquitin ligase. In Bos taurus (Bovine), this protein is Rab5 GDP/GTP exchange factor (RABGEF1).